The sequence spans 427 residues: Endothelin-1 receptor (427 aa).

Positions 1 to 20 are cleaved as a signal peptide; the sequence is METFCFRVSFWVALLGCVIS. Topologically, residues 21–80 are extracellular; the sequence is DNPESHSTNLSTHVDDFTTFRGTEFSLVVTTHRPTNLALPSNGSMHNYCPQQTKITSAFK. N-linked (GlcNAc...) asparagine glycosylation is found at Asn29 and Asn62. The helical transmembrane segment at 81 to 102 threads the bilayer; sequence YINTVISCTIFIVGMVGNATLL. At 103 to 112 the chain is on the cytoplasmic side; the sequence is RIIYQNKCMR. Residues 113-132 form a helical membrane-spanning segment; sequence NGPNALIASLALGDLIYVVI. Residues 133 to 159 are Extracellular-facing; sequence DLPINVFKLLAGRWPFENHDFGVFLCK. A disulfide bond links Cys158 and Cys239. A helical membrane pass occupies residues 160–181; sequence LFPFLQKSSVGITVLNLCALSV. Residues 182–205 lie on the Cytoplasmic side of the membrane; the sequence is DRYRAVASWSRVQGIGIPLVTAIE. The helical transmembrane segment at 206–229 threads the bilayer; that stretch reads IVSIWILSFILAIPEAIGFVMVPF. Residues 230 to 256 are Extracellular-facing; it reads EYKGEEHKTCMLNATSKFMEFYQDVKD. A helical membrane pass occupies residues 257 to 278; sequence WWLFGFYFCMPLVCTAIFYTLM. Over 279–306 the chain is Cytoplasmic; the sequence is TCEMLNRRNGSLRIALSEHLKQRREVAK. The chain crosses the membrane as a helical span at residues 307-328; the sequence is TVFCLVVIFALCWFPLHLSRIL. The Extracellular portion of the chain corresponds to 329–347; it reads KKTVYDEMDKNRCELLSFL. Residues 348–372 form a helical membrane-spanning segment; the sequence is LLMDYIGINLATMNSCINPIALYFV. The Cytoplasmic segment spans residues 373–427; the sequence is SKKFKNCFQSCLCCCCYQSKSLMTSVPMNGTSIQWKNHEQNNHNTERSSHKDSIN. Ser425 is modified (phosphoserine).

It belongs to the G-protein coupled receptor 1 family. Endothelin receptor subfamily. EDNRA sub-subfamily. In terms of assembly, interacts with HDAC7 and KAT5.

Its subcellular location is the cell membrane. In terms of biological role, receptor for endothelin-1. Mediates its action by association with G proteins that activate a phosphatidylinositol-calcium second messenger system. The rank order of binding affinities for ET-A is: ET1 &gt; ET2 &gt;&gt; ET3. The chain is Endothelin-1 receptor from Sus scrofa (Pig).